A 584-amino-acid chain; its full sequence is Alkaline nuclease (584 aa).

The segment at 409–429 (GGGADHHLRGSPGDSPPPIPF) is disordered.

Belongs to the herpesviridae alkaline nuclease family. Interacts with major DNA-binding protein; this interaction increases the nuclease processivity of the alkaline exonuclease.

Its subcellular location is the host nucleus. The protein localises to the host cytoplasm. Plays a role in processing non linear or branched viral DNA intermediates in order to promote the production of mature packaged unit-length linear progeny viral DNA molecules. Exhibits endonuclease and exonuclease activities and accepts both double-stranded and single-stranded DNA as substrate. Exonuclease digestion of DNA is in the 5'-&gt; 3' direction and the products are 5'-monophosphate nucleosides. Additionally, forms a recombinase with the major DNA-binding protein, which displays strand exchange activity. The chain is Alkaline nuclease (UL98) from Homo sapiens (Human).